The following is an 870-amino-acid chain: Dynamin-2 (870 aa).

The Dynamin-type G domain maps to 28 to 294 (HLDLPQIAVV…LTNHIRESLP (267 aa)). The G1 motif stretch occupies residues 38-45 (GGQSAGKS). Positions 41, 43, 44, 45, 46, 59, and 60 each coordinate GDP. Residues 64–66 (VTR) form a G2 motif region. A G3 motif region spans residues 136-139 (DLPG). The tract at residues 205–208 (TKLD) is G4 motif. Residues lysine 206, aspartate 208, and aspartate 211 each contribute to the GDP site. Tyrosine 231 carries the post-translational modification Phosphotyrosine; by SRC. Residues 235-238 (VNRS) are G5 motif. Positions 236, 237, and 239 each coordinate GDP. Position 299 is an N6-acetyllysine (lysine 299). The region spanning 519–625 (LVIRRGWLTI…WKASFLRAGV (107 aa)) is the PH domain. Phosphotyrosine; by SRC is present on tyrosine 597. Lysine 598 bears the N6-acetyllysine mark. A GED domain is found at 653–744 (VETIRNLVDS…IIGDISTSTV (92 aa)). Residues 741 to 870 (TSTVSTPVPP…IRPAEPSLLD (130 aa)) are disordered. The residue at position 755 (threonine 755) is a Phosphothreonine. Residues 756–767 (WLQSASSHSPTP) show a composition bias toward polar residues. A Phosphoserine; by CDK1 modification is found at serine 764. A compositionally biased stretch (low complexity) spans 796 to 806 (VPVGAAASFSA). Over residues 826 to 855 (PAPPQIPSRPVRIPPGIPPGVPSRRPPAAP) the composition is skewed to pro residues. Serine 848 bears the Phosphoserine; by GSK3-alpha mark.

The protein belongs to the TRAFAC class dynamin-like GTPase superfamily. Dynamin/Fzo/YdjA family. As to quaternary structure, oligomerizes into a helical polymer that self-assembles around the vesicle membrane, when associated to the menbrane through lipid binding. Interacts with SHANK1 and SHANK2. Interacts with SNX9. Interacts (via C-terminal proline-rich domain (PRD)) with SNX18 (via SH3 domain); this interaction regulates ATG9A and ATG16L1 trafficking from recycling endosomes to sites of autophagosome formation. Interacts with SNX33 (via SH3 domain). Interacts with MYO1E (via SH3 domain). Interacts with PSTPIP1 (via SH3 domain). Interacts with CTNND2. Interacts (via C-terminal proline-rich domain (PRD)) with BIN1 (via SH3 domain); this interaction allows the recruitment of DNM2 to the membrane tubules and inhibits self-assembly-stimulated GTPase activity on the membrane. Interacts with GABARAP, GABARAPL1 and GABARAPL2. Interacts with MAP1LC3B (the lipidate and non-lipidated LC3 form); this interaction mediates recycling endosome scission leading to autophagosome release. Interacts with ITSN1. Interacts (via C-terminal proline-rich domain (PRD)) with SH3BP4 (via SH3 domain); this interaction controls the GTPase activity and is prevented by EGFR-induced tyrosine phosphorylation of either DNM2 or SH3BP4. May interact with PIK3C3. May be a component of a complex composed of RAB5A (in GDP-bound form), DYN2 and PIK3C3. Interacts with SDC4; this interaction is markedly enhanced at focal ahesion site upon induction of focal adhesions and stress-fiber formation. Interacts with ACTN1. Interacts with CTTN; this interaction stimulates the intrinsic GTPase activity of DNM2 and stabilizes the association of DNM2 and actin filaments; in addition this interaction is stimulated by ligand binding to the receptor, leading to the recruitment of the DNM2-CTTN complex to the sequestered receptor-ligand complex to its internalization. Interacts with NOSTRIN (via SH3 domain); this interaction allows the recruitment of NOS3 to dynamin-positive structures. Interacts with TUBG1; this interaction may participate in centrosome cohesion. In terms of processing, phosphorylation at Ser-848 by GSK3-alpha relieves the inhibition of BIN1 and promotes endocytosis. Phosphorylation at Ser-764 by CDK1 is greatly increased upon mitotic entry. It regulates cytokinesis downstream of calcineurin, and does not affect clathrin-mediated endocytosis. Dephosphorylated by calcineurin/PP2 during cytokinesis in a Ca(2+)- and calmodulin-dependent manner. Phosphorylated on tyrosine residues by EGFR and after activation of SRC. As to expression, widely expressed. Expressed in skeletal muscle and the peripheral nerve.

The protein localises to the cytoplasm. The protein resides in the cytoskeleton. It is found in the cytoplasmic vesicle. It localises to the clathrin-coated vesicle. Its subcellular location is the cell projection. The protein localises to the uropodium. The protein resides in the endosome. It is found in the microtubule organizing center. It localises to the centrosome. Its subcellular location is the centriole. The protein localises to the recycling endosome. The protein resides in the phagocytic cup. It is found in the phagosome membrane. It localises to the podosome. Its subcellular location is the cell junction. The protein localises to the postsynaptic density. The protein resides in the synapse. It is found in the synaptosome. It localises to the midbody. Its subcellular location is the membrane. The protein localises to the clathrin-coated pit. It carries out the reaction GTP + H2O = GDP + phosphate + H(+). In terms of biological role, catalyzes the hydrolysis of GTP and utilizes this energy to mediate vesicle scission at plasma membrane during endocytosis and filament remodeling at many actin structures during organization of the actin cytoskeleton. Plays an important role in vesicular trafficking processes, namely clathrin-mediated endocytosis (CME), exocytic and clathrin-coated vesicle from the trans-Golgi network, and PDGF stimulated macropinocytosis. During vesicular trafficking process, associates to the membrane, through lipid binding, and self-assembles into ring-like structure through oligomerization to form a helical polymer around the vesicle membrane and leading to vesicle scission. Plays a role in organization of the actin cytoskeleton by mediating arrangement of stress fibers and actin bundles in podocytes. During organization of the actin cytoskeleton, self-assembles into ring-like structure that directly bundles actin filaments to form typical membrane tubules decorated with dynamin spiral polymers. Self-assembly increases GTPase activity and the GTP hydrolysis causes the rapid depolymerization of dynamin spiral polymers, and results in dispersion of actin bundles. Remodels, through its interaction with CTTN, bundled actin filaments in a GTPase-dependent manner and plays a role in orchestrating the global actomyosin cytoskeleton. The interaction with CTTN stabilizes the interaction of DNM2 and actin filaments and stimulates the intrinsic GTPase activity that results in actin filament-barbed ends and increases the sensitivity of filaments in bundles to the actin depolymerizing factor, CFL1. Plays a role in the autophagy process, by participating in the formation of ATG9A vesicles destined for the autophagosomes through its interaction with SNX18, by mediating recycling endosome scission leading to autophagosome release through MAP1LC3B interaction. Also regulates maturation of apoptotic cell corpse-containing phagosomes by recruiting PIK3C3 to the phagosome membrane. Also plays a role in cytokinesis. May participate in centrosome cohesion through its interaction with TUBG1. Plays a role in the regulation of neuron morphology, axon growth and formation of neuronal growth cones. Involved in membrane tubulation. This Homo sapiens (Human) protein is Dynamin-2.